The primary structure comprises 134 residues: Small ribosomal subunit protein uS9 (134 aa).

Residues 109–134 (DARRTEPHKPSKSTKGPRAKRQKSYR) form a disordered region. Residues 118 to 134 (PSKSTKGPRAKRQKSYR) show a composition bias toward basic residues.

The protein belongs to the universal ribosomal protein uS9 family.

This chain is Small ribosomal subunit protein uS9, found in Methanococcus aeolicus (strain ATCC BAA-1280 / DSM 17508 / OCM 812 / Nankai-3).